The sequence spans 1551 residues: Pentafunctional AROM polypeptide (1551 aa).

The segment at 1–379 (MSIEKVPILG…YQLKAHQVSK (379 aa)) is 3-dehydroquinate synthase. Residues 42–44 (DTN), 80–83 (ENNK), 111–113 (GGV), and Asp-116 contribute to the NAD(+) site. Residue Arg-127 participates in 7-phospho-2-dehydro-3-deoxy-D-arabino-heptonate binding. 136 to 137 (TT) serves as a coordination point for NAD(+). Positions 143 and 149 each coordinate 7-phospho-2-dehydro-3-deoxy-D-arabino-heptonate. An NAD(+)-binding site is contributed by Lys-158. Asn-159 provides a ligand contact to 7-phospho-2-dehydro-3-deoxy-D-arabino-heptonate. Residues 176-179 (FLET) and Asn-187 contribute to the NAD(+) site. Residue Glu-191 coordinates Zn(2+). Residues 191 to 194 (EVVK) and Lys-243 each bind 7-phospho-2-dehydro-3-deoxy-D-arabino-heptonate. Glu-253 (proton acceptor; for 3-dehydroquinate synthase activity) is an active-site residue. Residues 257 to 261 (RNLLN) and His-264 contribute to the 7-phospho-2-dehydro-3-deoxy-D-arabino-heptonate site. His-264 is a binding site for Zn(2+). His-268 serves as the catalytic Proton acceptor; for 3-dehydroquinate synthase activity. 7-phospho-2-dehydro-3-deoxy-D-arabino-heptonate is bound by residues His-280 and Lys-351. His-280 is a binding site for Zn(2+). The EPSP synthase stretch occupies residues 392-838 (VHPFTNPPKE…WDILHSKFKI (447 aa)). The shikimate kinase stretch occupies residues 858-1048 (DKSIIVIGMR…VPAGRSAAVV (191 aa)). 865–872 (GMRGTGKS) is a binding site for ATP. The interval 1049–1258 (LTSPDLNEVV…NDEEFLTIGE (210 aa)) is 3-dehydroquinase. Catalysis depends on Arg-1194, which acts as the Schiff-base intermediate with substrate; for 3-dehydroquinate dehydratase activity. The segment at 1271–1551 (AKKFWVIGSP…EIIHRAVVEE (281 aa)) is shikimate dehydrogenase.

This sequence in the N-terminal section; belongs to the sugar phosphate cyclases superfamily. Dehydroquinate synthase family. It in the 2nd section; belongs to the EPSP synthase family. In the 3rd section; belongs to the shikimate kinase family. The protein in the 4th section; belongs to the type-I 3-dehydroquinase family. This sequence in the C-terminal section; belongs to the shikimate dehydrogenase family. In terms of assembly, homodimer. The cofactor is Zn(2+).

It is found in the cytoplasm. It carries out the reaction 7-phospho-2-dehydro-3-deoxy-D-arabino-heptonate = 3-dehydroquinate + phosphate. The catalysed reaction is 3-dehydroquinate = 3-dehydroshikimate + H2O. The enzyme catalyses shikimate + NADP(+) = 3-dehydroshikimate + NADPH + H(+). It catalyses the reaction shikimate + ATP = 3-phosphoshikimate + ADP + H(+). It carries out the reaction 3-phosphoshikimate + phosphoenolpyruvate = 5-O-(1-carboxyvinyl)-3-phosphoshikimate + phosphate. It participates in metabolic intermediate biosynthesis; chorismate biosynthesis; chorismate from D-erythrose 4-phosphate and phosphoenolpyruvate: step 2/7. It functions in the pathway metabolic intermediate biosynthesis; chorismate biosynthesis; chorismate from D-erythrose 4-phosphate and phosphoenolpyruvate: step 3/7. Its pathway is metabolic intermediate biosynthesis; chorismate biosynthesis; chorismate from D-erythrose 4-phosphate and phosphoenolpyruvate: step 4/7. The protein operates within metabolic intermediate biosynthesis; chorismate biosynthesis; chorismate from D-erythrose 4-phosphate and phosphoenolpyruvate: step 5/7. It participates in metabolic intermediate biosynthesis; chorismate biosynthesis; chorismate from D-erythrose 4-phosphate and phosphoenolpyruvate: step 6/7. The AROM polypeptide catalyzes 5 consecutive enzymatic reactions in prechorismate polyaromatic amino acid biosynthesis. The protein is Pentafunctional AROM polypeptide of Candida albicans (strain SC5314 / ATCC MYA-2876) (Yeast).